Consider the following 276-residue polypeptide: Pantothenate synthetase (276 aa).

27–34 contacts ATP; it reads MGALHKGH. H34 (proton donor) is an active-site residue. (R)-pantoate is bound at residue Q58. Q58 contributes to the beta-alanine binding site. ATP is bound at residue 147–150; it reads GKKD. (R)-pantoate is bound at residue Q153. ATP contacts are provided by residues V176 and 184–187; that span reads LSSR.

This sequence belongs to the pantothenate synthetase family. Homodimer.

Its subcellular location is the cytoplasm. It carries out the reaction (R)-pantoate + beta-alanine + ATP = (R)-pantothenate + AMP + diphosphate + H(+). The protein operates within cofactor biosynthesis; (R)-pantothenate biosynthesis; (R)-pantothenate from (R)-pantoate and beta-alanine: step 1/1. In terms of biological role, catalyzes the condensation of pantoate with beta-alanine in an ATP-dependent reaction via a pantoyl-adenylate intermediate. This is Pantothenate synthetase from Helicobacter pylori (strain Shi470).